Reading from the N-terminus, the 378-residue chain is Deoxyguanosinetriphosphate triphosphohydrolase-like protein (378 aa).

The interval 1-28 is disordered; it reads MLAPFACQPGESRGRQKPESMSTFRSPF. Residues 62 to 198 enclose the HD domain; it reads RLTHSIEVAQ…AAIADDVAYS (137 aa).

The protein belongs to the dGTPase family. Type 2 subfamily.

The protein is Deoxyguanosinetriphosphate triphosphohydrolase-like protein of Cereibacter sphaeroides (strain ATCC 17029 / ATH 2.4.9) (Rhodobacter sphaeroides).